The primary structure comprises 1011 residues: Probable calcium-transporting ATPase (1011 aa).

At 1–65 (MLPENLPTDP…WKLVLAQFED (65 aa)) the chain is on the cytoplasmic side. The helical transmembrane segment at 66 to 84 (TLVRILLLAATVSFAMAVV) threads the bilayer. Over 85–90 (ENNAAD) the chain is Extracellular. Residues 91-110 (FVEPFIILLILILNATVGVW) form a helical membrane-spanning segment. Topologically, residues 111 to 258 (QENRAEGAIE…QVKLDEFGVL (148 aa)) are cytoplasmic. A helical membrane pass occupies residues 259 to 278 (LSKVIGYICLVVFAVNLVRW). Topologically, residues 279-303 (YATHKPTKNETFFTRYIQPSVHCLK) are extracellular. Residues 304–321 (VAVALAVAAIPEGLPAVV) form a helical membrane-spanning segment. Topologically, residues 322–770 (TTCLALGTRR…RYLISSNIGE (449 aa)) are cytoplasmic. The 4-aspartylphosphate intermediate role is filled by Asp357. Residue Lys514 participates in ATP binding. Residues 771 to 794 (VVCILVTGLFGLPEALSPVQLLWV) traverse the membrane as a helical segment. Residues 795–835 (NLVTDGLPATALGFNAPDRDIMEQRPRRMEEPIVNGWLFMR) lie on the Extracellular side of the membrane. Residues 836–856 (YMVIGVYVGLATVGGFLWWFL) traverse the membrane as a helical segment. Over 857–885 (RHGFSWHDLTTYTACSDMTNGTCLLLANP) the chain is Cytoplasmic. The helical transmembrane segment at 886-905 (QTARAIALSILVVVEMLNAL) threads the bilayer. The Extracellular segment spans residues 906–922 (NALSENASLIVSRPSSN). The helical transmembrane segment at 923 to 942 (VWLLFAIFSSLSLHLIIMYV) threads the bilayer. Residues 943–1011 (PFFAKLFNIV…MEKAQEKKKD (69 aa)) are Cytoplasmic-facing.

Belongs to the cation transport ATPase (P-type) (TC 3.A.3) family.

It is found in the flagellar pocket. The protein localises to the cell membrane. It carries out the reaction Ca(2+)(in) + ATP + H2O = Ca(2+)(out) + ADP + phosphate + H(+). In terms of biological role, this magnesium-dependent enzyme catalyzes the hydrolysis of ATP coupled with the transport of the calcium. The chain is Probable calcium-transporting ATPase (TBA1) from Trypanosoma brucei brucei.